The primary structure comprises 27 residues: Cupiennin-3a (27 aa).

Glu-27 carries the glutamic acid 1-amide modification.

As to expression, expressed by the venom gland.

It localises to the secreted. The polypeptide is Cupiennin-3a (Cupiennius salei (American wandering spider)).